The chain runs to 178 residues: Crossover junction endodeoxyribonuclease RuvC (178 aa).

Residues D8, E72, and D144 contribute to the active site. The Mg(2+) site is built by D8, E72, and D144.

The protein belongs to the RuvC family. Homodimer which binds Holliday junction (HJ) DNA. The HJ becomes 2-fold symmetrical on binding to RuvC with unstacked arms; it has a different conformation from HJ DNA in complex with RuvA. In the full resolvosome a probable DNA-RuvA(4)-RuvB(12)-RuvC(2) complex forms which resolves the HJ. Requires Mg(2+) as cofactor.

The protein localises to the cytoplasm. It catalyses the reaction Endonucleolytic cleavage at a junction such as a reciprocal single-stranded crossover between two homologous DNA duplexes (Holliday junction).. Functionally, the RuvA-RuvB-RuvC complex processes Holliday junction (HJ) DNA during genetic recombination and DNA repair. Endonuclease that resolves HJ intermediates. Cleaves cruciform DNA by making single-stranded nicks across the HJ at symmetrical positions within the homologous arms, yielding a 5'-phosphate and a 3'-hydroxyl group; requires a central core of homology in the junction. The consensus cleavage sequence is 5'-(A/T)TT(C/G)-3'. Cleavage occurs on the 3'-side of the TT dinucleotide at the point of strand exchange. HJ branch migration catalyzed by RuvA-RuvB allows RuvC to scan DNA until it finds its consensus sequence, where it cleaves and resolves the cruciform DNA. The protein is Crossover junction endodeoxyribonuclease RuvC of Idiomarina loihiensis (strain ATCC BAA-735 / DSM 15497 / L2-TR).